Consider the following 62-residue polypeptide: Potassium channel toxin alpha-KTx Tx308 (62 aa).

Residues 1–18 form the signal peptide; sequence MQKLFIVLLLFCILRLDA. 3 cysteine pairs are disulfide-bonded: C28–C46, C33–C59, and C37–C61.

Belongs to the short scorpion toxin superfamily. Potassium channel inhibitor family. Alpha-KTx 23 subfamily. As to expression, expressed by the venom gland.

It localises to the secreted. Functionally, may block potassium channels. In Buthus israelis (Israeli scorpion), this protein is Potassium channel toxin alpha-KTx Tx308.